The chain runs to 235 residues: Ubiquinone/menaquinone biosynthesis C-methyltransferase UbiE (235 aa).

S-adenosyl-L-methionine is bound by residues threonine 60 and aspartate 81.

The protein belongs to the class I-like SAM-binding methyltransferase superfamily. MenG/UbiE family.

It catalyses the reaction a 2-demethylmenaquinol + S-adenosyl-L-methionine = a menaquinol + S-adenosyl-L-homocysteine + H(+). The catalysed reaction is a 2-methoxy-6-(all-trans-polyprenyl)benzene-1,4-diol + S-adenosyl-L-methionine = a 5-methoxy-2-methyl-3-(all-trans-polyprenyl)benzene-1,4-diol + S-adenosyl-L-homocysteine + H(+). It functions in the pathway quinol/quinone metabolism; menaquinone biosynthesis; menaquinol from 1,4-dihydroxy-2-naphthoate: step 2/2. It participates in cofactor biosynthesis; ubiquinone biosynthesis. Its function is as follows. Methyltransferase required for the conversion of demethylmenaquinol (DMKH2) to menaquinol (MKH2) and the conversion of 2-polyprenyl-6-methoxy-1,4-benzoquinol (DDMQH2) to 2-polyprenyl-3-methyl-6-methoxy-1,4-benzoquinol (DMQH2). The polypeptide is Ubiquinone/menaquinone biosynthesis C-methyltransferase UbiE (Geotalea uraniireducens (strain Rf4) (Geobacter uraniireducens)).